Reading from the N-terminus, the 190-residue chain is Ribose 1,5-bisphosphate phosphokinase PhnN (190 aa).

Residue 19-26 (GPSGVGKD) coordinates ATP.

Belongs to the ribose 1,5-bisphosphokinase family.

It carries out the reaction alpha-D-ribose 1,5-bisphosphate + ATP = 5-phospho-alpha-D-ribose 1-diphosphate + ADP. It participates in metabolic intermediate biosynthesis; 5-phospho-alpha-D-ribose 1-diphosphate biosynthesis; 5-phospho-alpha-D-ribose 1-diphosphate from D-ribose 5-phosphate (route II): step 3/3. Catalyzes the phosphorylation of ribose 1,5-bisphosphate to 5-phospho-D-ribosyl alpha-1-diphosphate (PRPP). This is Ribose 1,5-bisphosphate phosphokinase PhnN from Ruegeria sp. (strain TM1040) (Silicibacter sp.).